We begin with the raw amino-acid sequence, 439 residues long: C4-dicarboxylate transport protein (439 aa).

9 consecutive transmembrane segments (helical) span residues 9–29 (HLYF…YYLP), 45–65 (MIKM…IAGM), 80–100 (LYFE…INII), 150–170 (GEIL…SAMG), 186–206 (AFFG…FGAM), 221–241 (LGML…VVLG), 291–311 (VVGL…SIYL), 334–354 (ILGV…SGFV), and 357–377 (AATF…ILGI).

Belongs to the dicarboxylate/amino acid:cation symporter (DAACS) (TC 2.A.23) family.

It localises to the cell inner membrane. In terms of biological role, responsible for the transport of dicarboxylates such as succinate, fumarate, and malate from the periplasm across the membrane. The protein is C4-dicarboxylate transport protein of Geobacter sp. (strain M21).